Reading from the N-terminus, the 320-residue chain is Olfactory receptor 2C3 (320 aa).

At 1 to 26 (MMEIANVSSPEVFVLLGFSTRPSLET) the chain is on the extracellular side. A glycan (N-linked (GlcNAc...) asparagine) is linked at N6. The helical transmembrane segment at 27–50 (VLFIVVLSFYMVSILGNGIIILVS) threads the bilayer. Topologically, residues 51-58 (HTDVHLHT) are cytoplasmic. The helical transmembrane segment at 59 to 80 (PMYFFLANLPFLDMSFTTSIVP) threads the bilayer. Topologically, residues 81-101 (QLLANLWGPQKTISYGGCVVQ) are extracellular. A disulfide bond links C98 and C190. The helical transmembrane segment at 102–121 (FYISHWLGATECVLLATMSY) threads the bilayer. Residues 122–140 (DRYAAICRPLHYTVIMHPQ) are Cytoplasmic-facing. A helical membrane pass occupies residues 141 to 159 (LCLGLALASWLGGLTTSMV). At 160–196 (GSTLTMLLPLCGNNCIDHFFCEMPLIMQLACVDTSLN) the chain is on the extracellular side. Residues 197-220 (EMEMYLASFVFVVLPLGLILVSYG) form a helical membrane-spanning segment. Topologically, residues 221–237 (HIARAVLKIRSAEGRRK) are cytoplasmic. A helical transmembrane segment spans residues 238–260 (AFNTCSSHVAVVSLFYGSIIFMY). Over 261–273 (LQPAKSTSHEQGK) the chain is Extracellular. Residues 274–293 (FIALFYTVVTPALNPLIYTL) form a helical membrane-spanning segment. Residues 294-320 (RNTEVKSALRHMVLENCCGSAGKLAQI) are Cytoplasmic-facing.

Belongs to the G-protein coupled receptor 1 family.

It localises to the cell membrane. Its function is as follows. Odorant receptor. In Homo sapiens (Human), this protein is Olfactory receptor 2C3 (OR2C3).